A 598-amino-acid polypeptide reads, in one-letter code: Elongation factor 4 (598 aa).

In terms of domain architecture, tr-type G spans 5-187 (ANIRNFSIIA…ALVEFIPAPT (183 aa)). GTP-binding positions include 17–22 (DHGKST) and 134–137 (NKID).

Belongs to the TRAFAC class translation factor GTPase superfamily. Classic translation factor GTPase family. LepA subfamily.

It is found in the cell inner membrane. It catalyses the reaction GTP + H2O = GDP + phosphate + H(+). Its function is as follows. Required for accurate and efficient protein synthesis under certain stress conditions. May act as a fidelity factor of the translation reaction, by catalyzing a one-codon backward translocation of tRNAs on improperly translocated ribosomes. Back-translocation proceeds from a post-translocation (POST) complex to a pre-translocation (PRE) complex, thus giving elongation factor G a second chance to translocate the tRNAs correctly. Binds to ribosomes in a GTP-dependent manner. The polypeptide is Elongation factor 4 (Psychrobacter arcticus (strain DSM 17307 / VKM B-2377 / 273-4)).